The chain runs to 797 residues: Outer membrane protein assembly factor BamA (797 aa).

The signal sequence occupies residues 1–21 (MKLKQIASALMMLGISPLALA). 5 consecutive POTRA domains span residues 23–90 (FTIQ…VIER), 91–171 (PTIG…IDEG), 174–262 (AKIT…VHEG), 265–344 (FRWG…IEPG), and 347–421 (IYVN…LTER).

It belongs to the BamA family. Part of the Bam complex.

It is found in the cell outer membrane. Functionally, part of the outer membrane protein assembly complex, which is involved in assembly and insertion of beta-barrel proteins into the outer membrane. The polypeptide is Outer membrane protein assembly factor BamA (Neisseria meningitidis serogroup B (strain ATCC BAA-335 / MC58)).